Consider the following 217-residue polypeptide: MTLLSINYEKFKYIEVPELLSKLGVVFMRGYVVGLVLALMLVTAPAMAEDFSMNGTEFAAAFIKNTVSNLDLGAKFLHLLYEVNDTDTNSNLFQNLWGLVYGGVLVAGWNNQVTAEVLETLADSDNLTSQRTNISESIRMMATNTSVVFGDTEGSQGLAALMKYQVKALQNTSITTTNSTGVEVPLVEAYAEALANTITDNVKFMMELFKAIPNALT.

Residues 26–48 (VFMRGYVVGLVLALMLVTAPAMA) traverse the membrane as a helical segment.

It is found in the membrane. This is an uncharacterized protein from Archaeoglobus fulgidus (strain ATCC 49558 / DSM 4304 / JCM 9628 / NBRC 100126 / VC-16).